We begin with the raw amino-acid sequence, 447 residues long: Ribosomal protein uS12 methylthiotransferase RimO (447 aa).

The 117-residue stretch at 6–122 folds into the MTTase N-terminal domain; the sequence is EKVSMVSLGC…IAEIIEEKSS (117 aa). [4Fe-4S] cluster is bound by residues Cys-15, Cys-51, Cys-85, Cys-160, Cys-164, and Cys-167. Residues 146–376 form the Radical SAM core domain; sequence SSPAYTAYLK…MKAQARVSFK (231 aa). The 69-residue stretch at 379 to 447 folds into the TRAM domain; the sequence is RRLIDTEEQV…DYDLIGEIIS (69 aa).

It belongs to the methylthiotransferase family. RimO subfamily. It depends on [4Fe-4S] cluster as a cofactor.

Its subcellular location is the cytoplasm. The catalysed reaction is L-aspartate(89)-[ribosomal protein uS12]-hydrogen + (sulfur carrier)-SH + AH2 + 2 S-adenosyl-L-methionine = 3-methylsulfanyl-L-aspartate(89)-[ribosomal protein uS12]-hydrogen + (sulfur carrier)-H + 5'-deoxyadenosine + L-methionine + A + S-adenosyl-L-homocysteine + 2 H(+). Functionally, catalyzes the methylthiolation of an aspartic acid residue of ribosomal protein uS12. In Geobacter sulfurreducens (strain ATCC 51573 / DSM 12127 / PCA), this protein is Ribosomal protein uS12 methylthiotransferase RimO.